The sequence spans 996 residues: Oxysterol-binding protein homolog 3 (996 aa).

Residues 1–183 (METIDIQNRS…KKKILFNASV (183 aa)) form a GOLD domain region. The disordered stretch occupies residues 75–114 (GSSSNIEEHHRRSSQHSHSSSNGSDNKRKERSYSSLSISG). Phosphoserine is present on residues Ser190 and Ser193. Thr210 is modified (phosphothreonine). One can recognise a PH domain in the interval 221 to 315 (GRYLQGYLLK…WVDALQTCFD (95 aa)). Residue Thr323 is modified to Phosphothreonine. Ser324 is modified (phosphoserine). A phosphothreonine mark is found at Thr325 and Thr352. Positions 338 to 372 (EVINKSSPQDHDHLTPTATTKSALSHRQHTQKDMD) are disordered. Positions 514–520 (EFFDAEE) match the FFAT motif. A disordered region spans residues 556 to 611 (KEVQLSGSEQIASSSVESYTTNDENHSRKHLKNRHKNRRRGHPHHQKTKSAQSSTE). Polar residues predominate over residues 558–577 (VQLSGSEQIASSSVESYTTN). The span at 582–603 (SRKHLKNRHKNRRRGHPHHQKT) shows a compositional bias: basic residues. Ser605 is subject to Phosphoserine. Residues 642-982 (SLLSFLRKNV…YITGPKSYWE (341 aa)) are OSBP-related domain (ORD). A 1,2-diacyl-sn-glycero-3-phospho-(1D-myo-inositol 4-phosphate)-binding positions include 657 to 660 (SIAM), Lys717, 745 to 746 (HR), and 945 to 949 (EQLQR).

It belongs to the OSBP family. As to quaternary structure, interacts with SCS2.

It localises to the cytoplasm. The protein resides in the endoplasmic reticulum membrane. Functionally, lipid transport protein (LTP) involved in non-vesicular transfer of lipids between membranes. Functions in phosphoinositide-coupled directional transport of various lipids by carrying the lipid molecule in a hydrophobic pocket and transferring it between membranes through the cytosol. Involved in maintenance of intracellular sterol distribution and homeostasis. May serve as a sensor of PI4P levels at PM-ER membrane contact site, regulating PI4P phosphatase SAC1 activity. May be involved in ergosterol transport from the plasma membrane (PM) to the ER, however it does not bind sterols directly. Plays a role in the positive regulation of vesicular transport of ceramide from the ER to the Golgi, negatively regulating COPII-mediated ER export of cargos. This chain is Oxysterol-binding protein homolog 3, found in Saccharomyces cerevisiae (strain ATCC 204508 / S288c) (Baker's yeast).